The following is a 180-amino-acid chain: Large ribosomal subunit protein uL6 (180 aa).

This sequence belongs to the universal ribosomal protein uL6 family. As to quaternary structure, part of the 50S ribosomal subunit.

Functionally, this protein binds to the 23S rRNA, and is important in its secondary structure. It is located near the subunit interface in the base of the L7/L12 stalk, and near the tRNA binding site of the peptidyltransferase center. The protein is Large ribosomal subunit protein uL6 of Flavobacterium johnsoniae (strain ATCC 17061 / DSM 2064 / JCM 8514 / BCRC 14874 / CCUG 350202 / NBRC 14942 / NCIMB 11054 / UW101) (Cytophaga johnsonae).